The sequence spans 132 residues: Large-conductance mechanosensitive channel (132 aa).

A run of 2 helical transmembrane segments spans residues 14–34 and 67–87; these read VIDLAVGVVIGAAFGKIVSSL and GNFIQTIFDFLIIAAAIFMFV.

This sequence belongs to the MscL family. In terms of assembly, homopentamer.

It is found in the cell membrane. Its function is as follows. Channel that opens in response to stretch forces in the membrane lipid bilayer. May participate in the regulation of osmotic pressure changes within the cell. This Bacillus anthracis (strain A0248) protein is Large-conductance mechanosensitive channel.